The primary structure comprises 452 residues: Eukaryotic translation initiation factor 3 subunit E (452 aa).

Over residues 1–17 (MADNTPTTANDLLNDAT) the composition is skewed to polar residues. The interval 1–23 (MADNTPTTANDLLNDATQAAAKS) is disordered. Residues 246 to 426 (PFFNHEPARD…GTVVMNHPPS (181 aa)) enclose the PCI domain.

Belongs to the eIF-3 subunit E family. In terms of assembly, component of the eukaryotic translation initiation factor 3 (eIF-3) complex.

It is found in the cytoplasm. In terms of biological role, component of the eukaryotic translation initiation factor 3 (eIF-3) complex, which is involved in protein synthesis of a specialized repertoire of mRNAs and, together with other initiation factors, stimulates binding of mRNA and methionyl-tRNAi to the 40S ribosome. The eIF-3 complex specifically targets and initiates translation of a subset of mRNAs involved in cell proliferation. This chain is Eukaryotic translation initiation factor 3 subunit E (int6), found in Botryotinia fuckeliana (strain B05.10) (Noble rot fungus).